Here is a 700-residue protein sequence, read N- to C-terminus: Elongation factor G 1 (700 aa).

One can recognise a tr-type G domain in the interval 8–290 (QNYRNIGISA…AVIEFMPSPI (283 aa)). Residues 17 to 24 (AHIDAGKT), 88 to 92 (DTPGH), and 142 to 145 (NKMD) contribute to the GTP site.

The protein belongs to the TRAFAC class translation factor GTPase superfamily. Classic translation factor GTPase family. EF-G/EF-2 subfamily.

It is found in the cytoplasm. Its function is as follows. Catalyzes the GTP-dependent ribosomal translocation step during translation elongation. During this step, the ribosome changes from the pre-translocational (PRE) to the post-translocational (POST) state as the newly formed A-site-bound peptidyl-tRNA and P-site-bound deacylated tRNA move to the P and E sites, respectively. Catalyzes the coordinated movement of the two tRNA molecules, the mRNA and conformational changes in the ribosome. In Polaromonas sp. (strain JS666 / ATCC BAA-500), this protein is Elongation factor G 1.